Here is a 631-residue protein sequence, read N- to C-terminus: Squalene--hopene cyclase (631 aa).

PFTB repeat units follow at residues 15 to 56 (LDRA…LDRV), 61 to 102 (MEKI…KYIG), and 241 to 282 (EIRA…QHPA). Aspartate 376 acts as the Proton donor in catalysis. PFTB repeat units lie at residues 400–441 (MTKG…GEVT), 468–508 (IRRA…KAVG), 516–557 (IQKA…SQTA), and 574–622 (ARRG…LALG).

This sequence belongs to the terpene cyclase/mutase family. As to quaternary structure, homodimer.

It localises to the cell membrane. It catalyses the reaction squalene = hop-22(29)-ene. It carries out the reaction squalene + H2O = hopan-22-ol. Its pathway is secondary metabolite biosynthesis; hopanoid biosynthesis. In terms of biological role, catalyzes the cyclization of squalene to two pentacyclic triterpenes, hop-22(29)-ene and hopan-22-ol (diplopterol); hopene and hopanol are formed at a constant ratio of 5:1. Is a key enzyme of hopanoid biosynthesis; hopanoids are components of the bacterial cytoplasmic membranes that play a vital role in stabilizing the membranes. This chain is Squalene--hopene cyclase (shc), found in Alicyclobacillus acidocaldarius subsp. acidocaldarius (strain ATCC 27009 / DSM 446 / BCRC 14685 / JCM 5260 / KCTC 1825 / NBRC 15652 / NCIMB 11725 / NRRL B-14509 / 104-IA) (Bacillus acidocaldarius).